The primary structure comprises 93 residues: Toxin RelE1 (93 aa).

The protein belongs to the RelE toxin family.

In terms of biological role, toxic component of a type II toxin-antitoxin (TA) system. Its toxic effect is neutralized by coexpression with cognate antitoxin RelB1 but no other ParD or RelB antitoxin. The protein is Toxin RelE1 (relE1) of Caulobacter vibrioides (strain ATCC 19089 / CIP 103742 / CB 15) (Caulobacter crescentus).